The chain runs to 79 residues: U-myrmeciitoxin(01)-Mg9a (79 aa).

The first 21 residues, 1 to 21 (MKLSCLLLTLAIIFVLTIVHA), serve as a signal peptide directing secretion. Residues 22–48 (PNVEAKALANPESDAIGFADAVGEADP) constitute a propeptide that is removed on maturation. Position 78 is a glutamine amide (Gln78).

Expressed by the venom gland.

Its subcellular location is the secreted. Functionally, may have antimicrobial properties, like most ant linear peptides. This Myrmecia gulosa (Red bulldog ant) protein is U-myrmeciitoxin(01)-Mg9a.